Consider the following 284-residue polypeptide: tRNA-cytidine(32) 2-sulfurtransferase (284 aa).

The span at 1 to 11 shows a compositional bias: polar residues; sequence MTFHQPVSETA. The segment at 1-20 is disordered; it reads MTFHQPVSETAQPDEASGHP. The short motif at 63 to 68 is the PP-loop motif element; it reads SGGKDS. Residues Cys138, Cys141, and Cys229 each coordinate [4Fe-4S] cluster.

This sequence belongs to the TtcA family. Homodimer. Mg(2+) is required as a cofactor. The cofactor is [4Fe-4S] cluster.

It is found in the cytoplasm. It catalyses the reaction cytidine(32) in tRNA + S-sulfanyl-L-cysteinyl-[cysteine desulfurase] + AH2 + ATP = 2-thiocytidine(32) in tRNA + L-cysteinyl-[cysteine desulfurase] + A + AMP + diphosphate + H(+). It functions in the pathway tRNA modification. In terms of biological role, catalyzes the ATP-dependent 2-thiolation of cytidine in position 32 of tRNA, to form 2-thiocytidine (s(2)C32). The sulfur atoms are provided by the cysteine/cysteine desulfurase (IscS) system. The chain is tRNA-cytidine(32) 2-sulfurtransferase from Chelativorans sp. (strain BNC1).